A 71-amino-acid chain; its full sequence is Natterin-P (71 aa).

Positions 1-18 are cleaved as a signal peptide; the sequence is MKLLVLLVTLLVLSWTSA. A propeptide spanning residues 19–45 is cleaved from the precursor; it reads EDLGDQEILENNEDNNHESELGEPAAQ. The segment covering 22 to 31 has biased composition (acidic residues); sequence GDQEILENNE. The disordered stretch occupies residues 22–54; the sequence is GDQEILENNEDNNHESELGEPAAQHTDDETSQL. Cys-62 and Cys-71 form a disulfide bridge.

It belongs to the natterin family. Expressed by the venom gland.

The protein localises to the secreted. Its activity is regulated as follows. Inhibited by tissue-kallikrein inhibitor TKI and trasylol. Plasma kallikrein inhibitor PKSI527 and classical inhibitors of serine-, metallo-, thiol- or aspartate-peptidases evokes a minor inhibition of the peptide digestion. Shows nociceptive, edema-inducing and kininogenase activity with release of kallidin from low molecular weight kininogen. The cleavage occurs at Met-Lys bonds. This chain is Natterin-P, found in Thalassophryne nattereri (Copper Joe toadfish).